The sequence spans 460 residues: Mitochondrial distribution and morphology protein 34 (460 aa).

The 196-residue stretch at 1–196 (MSFKFDWESL…LPGIIHRLSQ (196 aa)) folds into the SMP-LTD domain. Residues 304–321 (HNHQAPKRRTIKYKRKSK) are compositionally biased toward basic residues. 2 disordered regions span residues 304-356 (HNHQ…PSRE) and 368-460 (EPSS…AYSG). 2 stretches are compositionally biased toward low complexity: residues 330–355 (STEV…TPSR) and 393–405 (SPPS…DTSL).

It belongs to the MDM34 family. In terms of assembly, component of the ER-mitochondria encounter structure (ERMES) or MDM complex, composed of MMM1, MDM10, MDM12 and MDM34.

The protein localises to the mitochondrion outer membrane. Functionally, component of the ERMES/MDM complex, which serves as a molecular tether to connect the endoplasmic reticulum (ER) and mitochondria. Components of this complex are involved in the control of mitochondrial shape and protein biogenesis, and function in nonvesicular lipid trafficking between the ER and mitochondria. MDM34 is required for the interaction of the ER-resident membrane protein MMM1 and the outer mitochondrial membrane-resident beta-barrel protein MDM10. This Yarrowia lipolytica (strain CLIB 122 / E 150) (Yeast) protein is Mitochondrial distribution and morphology protein 34.